Reading from the N-terminus, the 1076-residue chain is MPKRTDIQSILILGAGPIVIGQACEFDYSGAQACKALREEGYRVILVNSNPATIMTDPEMADATYIEPIHWEVVRKIIEKERPDAILPTMGGQTALNCALALEKHGVLAEFGVEMIGATADAIDKAEDRSRFDKAMKSIGLECPRADTAKSMEEAYKVLDMVGFPCIIRPSFTMGGSGGGIAYNREEFEEICTRGLDLSPTNELLIDESLIGWKEYEMEVVRDKNDNCIIVCAIENFDPMGIHTGDSITVAPAQTLTDKEYQIMRNASLAVLREIGVETGGSNVQFGINPKDGRMVIIEMNPRVSRSSALASKATGFPIAKVAAKLAVGFTLDELMNDITGGATPASFEPTIDYVVTKIPRFNFEKFAGANDRLTTQMKSVGEVMAIGRNQQESLQKALRGLEVGAAGLDEKVDLDAPDALTKIRYELKEAGAERIWYIADAFRAGMSVDGVFNLTNIDRWFLVQIEELVKLEAEVKAGGFAGLNQDVLRKMKRKGFSDARLSKLLGVSENEIRRLRDQYNIHPVYKRVDTCAAEFKSDTAYMYSTYDEECEANPTDKDKIMVLGGGPNRIGQGIEFDYCCVHAALALREDGYETIMVNCNPETVSTDYDTSDRLYFEPVTLEDVLAIVRVEKPKGVIVQYGGQTPLKLARALEAAGVPVIGTSPDAIDRAEDRERFQQAVQRLGLKQPDNATVTAIEQAIEKSREIGFPLVVRPSYVLGGRAMEIVYDEQDLRRYFNEAVSVSNESPVLLDRFLDDATEVDVDAICDGERVVIGGIMEHIEQAGVHSGDSACSLPAYTLSQEIQDKMREQVEKLAFELGVRGLMNIQFAVKDNEVYLIEVNPRAARTVPFVSKATGAPLAKIAARVMVGQTLEQQGFTKEIIPPYYSVKEVVLPFNKFPGVDPLLGPEMRSTGEVMGVGATFAEAYAKAELGCGSVYPEGGRALLSVREGDKQRVVDLASKLVKLGYQLDATHGTAVILGEAGINPRLVNKVHEGRPHILDRIKNHEYTYIVNTASGRQAIEDSKVLRRGALAHKVNYTTTLNAAFATCMSHTADAKASVTSVQELHARVKANQA.

Residues 1–403 (MPKRTDIQSI…SLQKALRGLE (403 aa)) form a carboxyphosphate synthetic domain region. The ATP site is built by Arg129, Arg169, Gly175, Gly176, Glu208, Leu210, Glu215, Gly241, Ile242, His243, Gln285, and Glu299. Residues 133 to 328 (DKAMKSIGLE…IAKVAAKLAV (196 aa)) form the ATP-grasp 1 domain. Gln285, Glu299, and Asn301 together coordinate Mg(2+). Mn(2+) contacts are provided by Gln285, Glu299, and Asn301. Positions 404-553 (VGAAGLDEKV…YSTYDEECEA (150 aa)) are oligomerization domain. The interval 554–935 (NPTDKDKIMV…AYAKAELGCG (382 aa)) is carbamoyl phosphate synthetic domain. Positions 678 to 869 (QQAVQRLGLK…LAKIAARVMV (192 aa)) constitute an ATP-grasp 2 domain. Arg714, Arg753, Leu755, Glu760, Gly785, Val786, His787, Ser788, Gln828, and Glu840 together coordinate ATP. Mg(2+)-binding residues include Gln828, Glu840, and Asn842. The Mn(2+) site is built by Gln828, Glu840, and Asn842. In terms of domain architecture, MGS-like spans 936 to 1076 (SVYPEGGRAL…LHARVKANQA (141 aa)). The allosteric domain stretch occupies residues 936–1076 (SVYPEGGRAL…LHARVKANQA (141 aa)).

The protein belongs to the CarB family. In terms of assembly, composed of two chains; the small (or glutamine) chain promotes the hydrolysis of glutamine to ammonia, which is used by the large (or ammonia) chain to synthesize carbamoyl phosphate. Tetramer of heterodimers (alpha,beta)4. The cofactor is Mg(2+). Mn(2+) is required as a cofactor.

It carries out the reaction hydrogencarbonate + L-glutamine + 2 ATP + H2O = carbamoyl phosphate + L-glutamate + 2 ADP + phosphate + 2 H(+). It catalyses the reaction hydrogencarbonate + NH4(+) + 2 ATP = carbamoyl phosphate + 2 ADP + phosphate + 2 H(+). It participates in amino-acid biosynthesis; L-arginine biosynthesis; carbamoyl phosphate from bicarbonate: step 1/1. It functions in the pathway pyrimidine metabolism; UMP biosynthesis via de novo pathway; (S)-dihydroorotate from bicarbonate: step 1/3. Large subunit of the glutamine-dependent carbamoyl phosphate synthetase (CPSase). CPSase catalyzes the formation of carbamoyl phosphate from the ammonia moiety of glutamine, carbonate, and phosphate donated by ATP, constituting the first step of 2 biosynthetic pathways, one leading to arginine and/or urea and the other to pyrimidine nucleotides. The large subunit (synthetase) binds the substrates ammonia (free or transferred from glutamine from the small subunit), hydrogencarbonate and ATP and carries out an ATP-coupled ligase reaction, activating hydrogencarbonate by forming carboxy phosphate which reacts with ammonia to form carbamoyl phosphate. This is Carbamoyl phosphate synthase large chain from Vibrio cholerae serotype O1 (strain ATCC 39315 / El Tor Inaba N16961).